Consider the following 319-residue polypeptide: Oxaloacetate tautomerase fahd2, mitochondrial (319 aa).

A mitochondrion-targeting transit peptide spans 1 to 31 (MLTQTRVALRVLKNAHLTLPKRNISQSPALS). Mg(2+) contacts are provided by Glu-164, Glu-166, and Asp-195.

Belongs to the FAH family. The cofactor is Mg(2+). It depends on Mn(2+) as a cofactor.

It is found in the mitochondrion. The catalysed reaction is oxaloacetate = enol-oxaloacetate. Its function is as follows. Tautomerase that converts enol-oxaloacetate, a strong inhibitor of succinate dehydrogenase, to the physiological keto form of oxaloacetate. It is thereby required to maximize aerobic respiration efficiency by preventing succinate dehydrogenase inhibition. This is Oxaloacetate tautomerase fahd2, mitochondrial (fahd2) from Xenopus laevis (African clawed frog).